A 348-amino-acid polypeptide reads, in one-letter code: Probable dual-specificity RNA methyltransferase RlmN (348 aa).

Glutamate 93 acts as the Proton acceptor in catalysis. The Radical SAM core domain maps to 99–333 (TEKRLTACLS…VSLRKSRGLD (235 aa)). An intrachain disulfide couples cysteine 106 to cysteine 338. Positions 113, 117, and 120 each coordinate [4Fe-4S] cluster. Residues 160–161 (GE), serine 190, 219–221 (SLH), and asparagine 295 each bind S-adenosyl-L-methionine. Cysteine 338 acts as the S-methylcysteine intermediate in catalysis.

Belongs to the radical SAM superfamily. RlmN family. It depends on [4Fe-4S] cluster as a cofactor.

The protein localises to the cytoplasm. The catalysed reaction is adenosine(2503) in 23S rRNA + 2 reduced [2Fe-2S]-[ferredoxin] + 2 S-adenosyl-L-methionine = 2-methyladenosine(2503) in 23S rRNA + 5'-deoxyadenosine + L-methionine + 2 oxidized [2Fe-2S]-[ferredoxin] + S-adenosyl-L-homocysteine. It carries out the reaction adenosine(37) in tRNA + 2 reduced [2Fe-2S]-[ferredoxin] + 2 S-adenosyl-L-methionine = 2-methyladenosine(37) in tRNA + 5'-deoxyadenosine + L-methionine + 2 oxidized [2Fe-2S]-[ferredoxin] + S-adenosyl-L-homocysteine. In terms of biological role, specifically methylates position 2 of adenine 2503 in 23S rRNA and position 2 of adenine 37 in tRNAs. The protein is Probable dual-specificity RNA methyltransferase RlmN of Prochlorococcus marinus (strain AS9601).